The sequence spans 621 residues: Stimulated by retinoic acid gene 6 protein-like (621 aa).

The Extracellular segment spans residues 1 to 21 (MLAASTRTRQINITCDNPVDR). N-linked (GlcNAc...) asparagine glycosylation is present at N12. The chain crosses the membrane as a helical span at residues 22–42 (EVFLHYSLIPSLCIILVLSFL). Over 43–53 (QRREHRRQRDD) the chain is Cytoplasmic. A helical transmembrane segment spans residues 54–74 (TSYLLGNHFGIIVPLDFVGTF). The Extracellular segment spans residues 75-110 (SNRWSYGAAFGATANKVMFLFSEGYQPLTVPQWAQA). Residues 111 to 131 (FVLFIGGMEVGLSYFPFFACL) form a helical membrane-spanning segment. Topologically, residues 132-137 (SSEFQL) are cytoplasmic. A helical membrane pass occupies residues 138-158 (VSSILGFSYSLTWFVVTVLQI). Over 159 to 173 (SQCPHGQFLGRFETL) the chain is Extracellular. Residues 174–194 (VFYWPSLLCLGFLLGRFLHMF) traverse the membrane as a helical segment. The Cytoplasmic segment spans residues 195 to 258 (LKALPVHLGL…CFQFPSRMVG (64 aa)). Residues 259–279 (TLLLAFICLYLFIVIEFCVFL) traverse the membrane as a helical segment. At 280–321 (HVRDKLDMFEDKLESYLTHMNETGTLTPIILQVKELISVTKG) the chain is on the extracellular side. The chain crosses the membrane as a helical span at residues 322 to 342 (VWVVTILPAALTCVTYLFHIL). Residues 343 to 383 (ACYRKHMKRLWAGDKHFLPQKFHSPSSAASVVAIARYSGWQ) lie on the Cytoplasmic side of the membrane. A helical membrane pass occupies residues 384–404 (IAYILWGYLIIHVVQSLCGVM). At 405 to 424 (LMYGLVLPIIHHRGLEMLQG) the chain is on the extracellular side. A helical membrane pass occupies residues 425 to 445 (FGLGVLTLSIVVGLIILQVWI). Residues 446-476 (AGTFFLQPKLGTSDKQKPLALNNRRAFHNFN) are Cytoplasmic-facing. The chain crosses the membrane as a helical span at residues 477–497 (YFLFFYNVLLGLGACLSRLLI). Residues 498–621 (SCLLGTWLIA…TQILLTCSDC (124 aa)) lie on the Extracellular side of the membrane. T612 carries the phosphothreonine modification.

In terms of processing, glycosylated. In terms of tissue distribution, highly expressed in liver and small intestine. Also expressed in spleen, kidney, colon, stomach, placenta, adipose tissue and isolated adipocytes.

The protein localises to the cell membrane. Its function is as follows. Acts as a high-affinity cell-surface receptor for retinol-binding protein RBP4 and mediates RBP4-dependent retinol uptake in the liver. This chain is Stimulated by retinoic acid gene 6 protein-like, found in Mus musculus (Mouse).